Reading from the N-terminus, the 401-residue chain is Insertion element ISM1 uncharacterized 48.3 kDa protein (401 aa).

This polypeptide is involved in transposition, and should therefore bind to nucleic acids. The protein is Insertion element ISM1 uncharacterized 48.3 kDa protein of Methanobrevibacter smithii.